Consider the following 271-residue polypeptide: Formamidopyrimidine-DNA glycosylase (271 aa).

Proline 2 functions as the Schiff-base intermediate with DNA in the catalytic mechanism. Catalysis depends on glutamate 3, which acts as the Proton donor. The Proton donor; for beta-elimination activity role is filled by lysine 57. The DNA site is built by histidine 90, arginine 109, and lysine 151. The FPG-type zinc-finger motif lies at 236 to 270 (HVYGRGGETCTSCGNLLSEIRLGQRTTVFCGICQT). Catalysis depends on arginine 260, which acts as the Proton donor; for delta-elimination activity.

Belongs to the FPG family. In terms of assembly, monomer. It depends on Zn(2+) as a cofactor.

It carries out the reaction Hydrolysis of DNA containing ring-opened 7-methylguanine residues, releasing 2,6-diamino-4-hydroxy-5-(N-methyl)formamidopyrimidine.. The catalysed reaction is 2'-deoxyribonucleotide-(2'-deoxyribose 5'-phosphate)-2'-deoxyribonucleotide-DNA = a 3'-end 2'-deoxyribonucleotide-(2,3-dehydro-2,3-deoxyribose 5'-phosphate)-DNA + a 5'-end 5'-phospho-2'-deoxyribonucleoside-DNA + H(+). Its function is as follows. Involved in base excision repair of DNA damaged by oxidation or by mutagenic agents. Acts as a DNA glycosylase that recognizes and removes damaged bases. Has a preference for oxidized purines, such as 7,8-dihydro-8-oxoguanine (8-oxoG). Has AP (apurinic/apyrimidinic) lyase activity and introduces nicks in the DNA strand. Cleaves the DNA backbone by beta-delta elimination to generate a single-strand break at the site of the removed base with both 3'- and 5'-phosphates. The protein is Formamidopyrimidine-DNA glycosylase of Shewanella baltica (strain OS155 / ATCC BAA-1091).